The primary structure comprises 160 residues: Cytochrome b6-f complex subunit 4 (160 aa).

The next 3 membrane-spanning stretches (helical) occupy residues 36–56 (LLYTFPVVILGTLACVVGLAV), 95–115 (LLGILLQTAIPLGLMLVPFIE), and 127–147 (PIAMAVFLFGTLVTLWMGVAA).

This sequence belongs to the cytochrome b family. PetD subfamily. The 4 large subunits of the cytochrome b6-f complex are cytochrome b6, subunit IV (17 kDa polypeptide, PetD), cytochrome f and the Rieske protein, while the 4 small subunits are PetG, PetL, PetM and PetN. The complex functions as a dimer.

The protein localises to the cellular thylakoid membrane. Component of the cytochrome b6-f complex, which mediates electron transfer between photosystem II (PSII) and photosystem I (PSI), cyclic electron flow around PSI, and state transitions. This chain is Cytochrome b6-f complex subunit 4, found in Prochlorothrix hollandica.